Here is a 603-residue protein sequence, read N- to C-terminus: Aspartate--tRNA(Asp/Asn) ligase (603 aa).

An L-aspartate-binding site is contributed by Glu-182. The aspartate stretch occupies residues 206-209 (QLFK). Arg-228 serves as a coordination point for L-aspartate. Residues 228–230 (RDE) and Gln-237 contribute to the ATP site. Residue His-454 participates in L-aspartate binding. Position 500 (Glu-500) interacts with ATP. Position 507 (Arg-507) interacts with L-aspartate. Position 552 to 555 (552 to 555 (GLDR)) interacts with ATP.

The protein belongs to the class-II aminoacyl-tRNA synthetase family. Type 1 subfamily. Homodimer.

Its subcellular location is the cytoplasm. It catalyses the reaction tRNA(Asx) + L-aspartate + ATP = L-aspartyl-tRNA(Asx) + AMP + diphosphate. Functionally, aspartyl-tRNA synthetase with relaxed tRNA specificity since it is able to aspartylate not only its cognate tRNA(Asp) but also tRNA(Asn). Reaction proceeds in two steps: L-aspartate is first activated by ATP to form Asp-AMP and then transferred to the acceptor end of tRNA(Asp/Asn). The protein is Aspartate--tRNA(Asp/Asn) ligase of Aquifex aeolicus (strain VF5).